The primary structure comprises 735 residues: Muskelin (735 aa).

At Ala-2 the chain carries N-acetylalanine. The 33-residue stretch at 172 to 204 (REQEAIRLCLKHFRQHNYTEAFESLQKKTKIAL) folds into the LisH domain. The CTLH domain maps to 206–258 (HPMLTDIHDKLVLKGDFDACEELIEKAVNDGLFNQYISQQEYKPRWSQIIPKS). Kelch repeat units lie at residues 284 to 330 (TVYL…SCHK), 339 to 391 (QIYT…FDHQ), 408 to 458 (ILTC…SRIG), 469 to 515 (CLYV…TGFT), 526 to 578 (EIHV…SLQE), and 597 to 651 (VHYL…AQMD).

In terms of assembly, homodimer; may form higher oligomers. Identified in the CTLH complex that contains GID4, RANBP9 and/or RANBP10, MKLN1, MAEA, RMND5A (or alternatively its paralog RMND5B), GID8, ARMC8, WDR26 and YPEL5. Within this complex, MAEA, RMND5A (or alternatively its paralog RMND5B), GID8, WDR26, and RANBP9 and/or RANBP10 form the catalytic core, while GID4, MKLN1, ARMC8 and YPEL5 have ancillary roles. Interacts with RANBP9. Part of a complex consisting of RANBP9, MKLN1 and GID8. Interacts with GABRA1. Interacts with the C-terminal tail of PTGER3.

The protein localises to the cytoplasm. It localises to the cytosol. It is found in the nucleus. The protein resides in the nucleoplasm. Its subcellular location is the cell projection. The protein localises to the ruffle. It localises to the cell cortex. It is found in the synapse. The protein resides in the postsynapse. Functionally, component of the CTLH E3 ubiquitin-protein ligase complex that selectively accepts ubiquitin from UBE2H and mediates ubiquitination and subsequent proteasomal degradation of the transcription factor HBP1. Required for internalization of the GABA receptor GABRA1 from the cell membrane via endosomes and subsequent GABRA1 degradation. Acts as a mediator of cell spreading and cytoskeletal responses to the extracellular matrix component THBS1. This chain is Muskelin (MKLN1), found in Pongo abelii (Sumatran orangutan).